The sequence spans 232 residues: DASH complex subunit DUO1 (232 aa).

2 disordered regions span residues 1 to 44 (MADE…GGMR) and 133 to 232 (ERRR…RGAK). Residues 128 to 171 (ELEAEERRRQEEVERRAAEAERRREEARRKAEEEERRRAAAAAA) adopt a coiled-coil conformation. Positions 133-165 (ERRRQEEVERRAAEAERRREEARRKAEEEERRR) are enriched in basic and acidic residues. Composition is skewed to low complexity over residues 167-183 (AAAA…VGRG) and 191-213 (GSGL…TTSG).

This sequence belongs to the DASH complex DUO1 family. Component of the DASH complex consisting of ASK1, DAD1, DAD2, DAD3, DAD4, DAM1, DUO1, HSK3, SPC19 and SPC34, with a stoichiometry of one copy of each subunit per complex. Multiple DASH complexes oligomerize to form a ring that encircles spindle microtubules and organizes the rod-like NDC80 complexes of the outer kinetochore. DASH complex oligomerization strengthens microtubule attachments. On cytoplasmic microtubules, DASH complexes appear to form patches instead of rings.

The protein resides in the nucleus. The protein localises to the cytoplasm. It localises to the cytoskeleton. Its subcellular location is the spindle pole. It is found in the chromosome. The protein resides in the centromere. The protein localises to the kinetochore. In terms of biological role, component of the DASH complex that connects microtubules with kinetochores and couples microtubule depolymerisation to chromosome movement; it is involved in retrieving kinetochores to the spindle poles before their re-orientation on the spindle in early mitosis and allows microtubule depolymerization to pull chromosomes apart and resist detachment during anaphase. Kinetochores, consisting of a centromere-associated inner segment and a microtubule-contacting outer segment, play a crucial role in chromosome segregation by mediating the physical connection between centromeric DNA and microtubules. Kinetochores also serve as an input point for the spindle assembly checkpoint, which delays anaphase until all chromosomes have bioriented on the mitotic spindle. This Chaetomium thermophilum (strain DSM 1495 / CBS 144.50 / IMI 039719) (Thermochaetoides thermophila) protein is DASH complex subunit DUO1.